Reading from the N-terminus, the 66-residue chain is Dermaseptin PD-3-7 (66 aa).

Residues 1 to 22 (MSFMKKSLLLVLFLGVVSLSNC) form the signal peptide. A propeptide spanning residues 23 to 40 (EEEKGENENEDHEEHHEE) is cleaved from the precursor.

Expressed by the skin glands.

Its subcellular location is the secreted. Possesses a potent antimicrobial activity against Gram-positive and Gram-negative bacteria. Probably acts by disturbing membrane functions with its amphipathic structure. This chain is Dermaseptin PD-3-7, found in Agalychnis dacnicolor (Giant Mexican leaf frog).